Reading from the N-terminus, the 924-residue chain is Periplasmic nitrate reductase (924 aa).

Positions 1–30 (MNRRDFIKNTAIASAASVAGLSVPSSMLGA) form a signal peptide, tat-type signal. A 4Fe-4S Mo/W bis-MGD-type domain is found at 35–91 (WKWDKAVCRFCGTGCGIMIARKDGKIVATKGDPAAPVNRGLNCIKGYFNAKIMYGED). The [4Fe-4S] cluster site is built by cysteine 42, cysteine 45, cysteine 49, and cysteine 77. Mo-bis(molybdopterin guanine dinucleotide) contacts are provided by residues lysine 79, glutamine 147, asparagine 172, cysteine 176, 209–216 (WGANMAEM), methionine 417, glutamine 421, asparagine 527, 552–553 (SD), lysine 575, aspartate 602, and 814–823 (TGRVLEHWHS). Position 890 (tryptophan 890) interacts with substrate. Residues asparagine 898 and lysine 915 each contribute to the Mo-bis(molybdopterin guanine dinucleotide) site.

It belongs to the prokaryotic molybdopterin-containing oxidoreductase family. NasA/NapA/NarB subfamily. Component of the periplasmic nitrate reductase NapAB complex composed of NapA and NapB. Requires [4Fe-4S] cluster as cofactor. The cofactor is Mo-bis(molybdopterin guanine dinucleotide). In terms of processing, predicted to be exported by the Tat system. The position of the signal peptide cleavage has not been experimentally proven.

The protein resides in the periplasm. It carries out the reaction 2 Fe(II)-[cytochrome] + nitrate + 2 H(+) = 2 Fe(III)-[cytochrome] + nitrite + H2O. Catalytic subunit of the periplasmic nitrate reductase complex NapAB. Receives electrons from NapB and catalyzes the reduction of nitrate to nitrite. The chain is Periplasmic nitrate reductase from Campylobacter jejuni subsp. jejuni serotype O:6 (strain 81116 / NCTC 11828).